Consider the following 436-residue polypeptide: Methylenetetrahydrofolate--tRNA-(uracil-5-)-methyltransferase TrmFO (436 aa).

8–13 (GAGLAG) is an FAD binding site.

This sequence belongs to the MnmG family. TrmFO subfamily. FAD is required as a cofactor.

Its subcellular location is the cytoplasm. It carries out the reaction uridine(54) in tRNA + (6R)-5,10-methylene-5,6,7,8-tetrahydrofolate + NADH + H(+) = 5-methyluridine(54) in tRNA + (6S)-5,6,7,8-tetrahydrofolate + NAD(+). The catalysed reaction is uridine(54) in tRNA + (6R)-5,10-methylene-5,6,7,8-tetrahydrofolate + NADPH + H(+) = 5-methyluridine(54) in tRNA + (6S)-5,6,7,8-tetrahydrofolate + NADP(+). Functionally, catalyzes the folate-dependent formation of 5-methyl-uridine at position 54 (M-5-U54) in all tRNAs. This Persephonella marina (strain DSM 14350 / EX-H1) protein is Methylenetetrahydrofolate--tRNA-(uracil-5-)-methyltransferase TrmFO.